Consider the following 173-residue polypeptide: Translation initiation factor IF-3 (173 aa).

The protein belongs to the IF-3 family. Monomer.

It is found in the cytoplasm. IF-3 binds to the 30S ribosomal subunit and shifts the equilibrium between 70S ribosomes and their 50S and 30S subunits in favor of the free subunits, thus enhancing the availability of 30S subunits on which protein synthesis initiation begins. The polypeptide is Translation initiation factor IF-3 (Clostridium tetani (strain Massachusetts / E88)).